Consider the following 88-residue polypeptide: Sec-independent protein translocase protein TatA (88 aa).

A helical membrane pass occupies residues 1 to 21; sequence MGSLSPWHWAILAVVVIVLFG. Over residues 43–52 the composition is skewed to basic and acidic residues; it reads MREMQSETKA. Residues 43–88 form a disordered region; it reads MREMQSETKAEPSAIETNTANPTPVQSQRIDPAAATGQDQTEARPA. A compositionally biased stretch (polar residues) spans 57 to 71; that stretch reads IETNTANPTPVQSQR.

It belongs to the TatA/E family. As to quaternary structure, the Tat system comprises two distinct complexes: a TatABC complex, containing multiple copies of TatA, TatB and TatC subunits, and a separate TatA complex, containing only TatA subunits. Substrates initially bind to the TatABC complex, which probably triggers association of the separate TatA complex to form the active translocon.

It is found in the cell membrane. Functionally, part of the twin-arginine translocation (Tat) system that transports large folded proteins containing a characteristic twin-arginine motif in their signal peptide across membranes. TatA could form the protein-conducting channel of the Tat system. This Mycobacterium marinum (strain ATCC BAA-535 / M) protein is Sec-independent protein translocase protein TatA.